The following is a 604-amino-acid chain: Glucose oxidase 2 (604 aa).

The signal sequence occupies residues 1-16 (MKLLGLLSGLVVVATA). FAD is bound by residues Leu-49 and Thr-50. Residue Asn-63 is glycosylated (N-linked (GlcNAc...) asparagine). FAD is bound at residue Glu-70. The N-linked (GlcNAc...) asparagine glycan is linked to Asn-109. FAD-binding residues include Ser-123, Asn-127, Gly-128, and Ser-130. An intrachain disulfide couples Cys-184 to Cys-226. Asn-214 carries an N-linked (GlcNAc...) asparagine glycan. An FAD-binding site is contributed by Val-270. Asn-375, Asn-408, and Asn-517 each carry an N-linked (GlcNAc...) asparagine glycan. His-536 functions as the Proton acceptor in the catalytic mechanism. O2 is bound by residues Arg-557 and Val-558. FAD contacts are provided by Gly-569 and Met-581. A glycan (N-linked (GlcNAc...) asparagine) is linked at Asn-600.

The protein belongs to the GMC oxidoreductase family. As to quaternary structure, homodimer. FAD is required as a cofactor.

It is found in the secreted. The protein resides in the cell wall. It localises to the cytoplasm. Its subcellular location is the extracellular space. The protein localises to the extracellular matrix. The enzyme catalyses beta-D-glucose + O2 = D-glucono-1,5-lactone + H2O2. In terms of biological role, glucose oxidase catalyzes the oxidation of beta-D-glucose to D-glucono-delta-lactone and hydrogen peroxide in the presence of molecular oxygen. D-glucono-delta-lactone is sequentially hydrolyzed by lactonase to D-gluconic acid, and the resulting hydrogen peroxide is hydrolyzed by catalase to oxygen and water. Acts as a key factor contributing to fungal disease of apple. The production of gluconic acid leads to host tissue acidification that enhances the expression of pectolytic enzymes and the establishment of conditions for necrotrophic development of P.expansum. This is Glucose oxidase 2 from Penicillium expansum (Blue mold rot fungus).